Reading from the N-terminus, the 574-residue chain is MELLILKANAITTILTAVTFCFASGQNITEEFYQSTCSAVSKGYLSALRTGWYTSVITIELSNIKENKCNGTDAKVKLIKQELDKYKNAVTELQLLMQSTPPTNNRARRELPRFMNYTLNNAKKTNVTLSKKRKRRFLGFLLGVGSAIASGVAVSKVLHLEGEVNKIKSALLSTNKAVVSLSNGVSVLTSKVLDLKNYIDKQLLPIVNKQSCSISNIETVIEFQQKNNRLLEITREFSVNAGVTTPVSTYMLTNSELLSLINDMPITNDQKKLMSNNVQIVRQQSYSIMSIIKEEVLAYVVQLPLYGVIDTPCWKLHTSPLCTTNTKEGSNICLTRTDRGWYCDNAGSVSFFPQAETCKVQSNRVFCDTMNSLTLPSEINLCNVDIFNPKYDCKIMTSKTDVSSSVITSLGAIVSCYGKTKCTASNKNRGIIKTFSNGCDYVSNKGMDTVSVGNTLYYVNKQEGKSLYVKGEPIINFYDPLVFPSDEFDASISQVNEKINQSLAFIRKSDELLHNVNAGKSTTNIMITTIIIVIIVILLSLIAVGLLLYCKARSTPVTLSKDQLSGINNIAFSN.

The first 25 residues, 1–25, serve as a signal peptide directing secretion; sequence MELLILKANAITTILTAVTFCFASG. Residues 26–524 are Extracellular-facing; sequence QNITEEFYQS…NVNAGKSTTN (499 aa). Asn-27 and Asn-70 each carry an N-linked (GlcNAc...) asparagine; by host glycan. 7 disulfides stabilise this stretch: Cys-37–Cys-439, Cys-69–Cys-212, Cys-313–Cys-343, Cys-322–Cys-333, Cys-358–Cys-367, Cys-382–Cys-393, and Cys-416–Cys-422. The stretch at 76–96 forms a coiled coil; the sequence is VKLIKQELDKYKNAVTELQLL. Asn-116, Asn-120, and Asn-126 each carry an N-linked (GlcNAc...) asparagine; by host glycan. The fusion peptide stretch occupies residues 137-157; the sequence is FLGFLLGVGSAIASGVAVSKV. Positions 158–209 form a coiled coil; that stretch reads LHLEGEVNKIKSALLSTNKAVVSLSNGVSVLTSKVLDLKNYIDKQLLPIVNK. Residues 481–516 adopt a coiled-coil conformation; sequence LVFPSDEFDASISQVNEKINQSLAFIRKSDELLHNV. Asn-500 carries N-linked (GlcNAc...) asparagine; by host glycosylation. The chain crosses the membrane as a helical span at residues 525–550; it reads IMITTIIIVIIVILLSLIAVGLLLYC. Cys-550 carries the S-palmitoyl cysteine; by host lipid modification. Residues 551-574 are Cytoplasmic-facing; that stretch reads KARSTPVTLSKDQLSGINNIAFSN.

The protein belongs to the paramyxoviruses fusion glycoprotein family. Homotrimer. Heterodimer with fusion protein F2; disulfide-linked. Interacts with host NCL; this interaction plays a role in viral entry into the host cell. As a heterodimer with F2, interacts with host heparan sulfate. As a heterodimer with F2, interacts with host IGF1R; this interaction activates PRKCZ/PKCzeta that recruits NCL/nucleolin from the host nucleus to the plasma membrane. Part of a complex composed of F1, F2 and G glycoproteins. As a heterodimer with F2, interacts with host RHOA; this interaction facilitates virus-induced syncytium formation. In terms of assembly, homotrimer. Heterodimer with fusion protein F1; disulfide-linked. As a heterodimer with F1, interacts with host heparan sulfate. As a heterodimer with F1, interacts with host IGF1R; this interaction activates PRKCZ/PKCzeta that recruits NCL/nucleolin from the host nucleus to the plasma membrane. Part of a complex composed of F1, F2 and G glycoproteins. As a heterodimer with F1, interacts with host RHOA; this interaction facilitates virus-induced syncytium formation. Post-translationally, the F glycoprotein is synthesized as a F0 inactive precursor that is heavily N-glycosylated and processed at two sites by a host furin-like protease probably in the Golgi. The cleavage site between p27 and F1 may occur after endocytosis to yield the mature F1 and F2 proteins. Both cleavages are required for membrane fusion and p27 is released from the processed protein.

It localises to the host Golgi apparatus membrane. It is found in the virion membrane. The protein resides in the host cell membrane. Inactive precursor that is cleaved at two sites by a furin-like protease to give rise to the mature F1 and F2 fusion glycoproteins. In terms of biological role, class I viral fusion protein. Under the current model, the protein has at least 3 conformational states: pre-fusion native state, pre-hairpin intermediate state, and post-fusion hairpin state. During viral and plasma cell membrane fusion, the coiled coil regions assume a trimer-of-hairpins structure, positioning the fusion peptide in close proximity to the C-terminal region of the ectodomain. The formation of this structure appears to drive apposition and subsequent fusion of viral and cellular membranes leading to delivery of the nucleocapsid into the cytoplasm. This fusion is pH independent and occurs at the plasma or endosomal membrane. The trimer of F1-F2 (F protein) also facilitates the attachment to host cell by binding to host heparan sulfate. F protein is involved in the entry into the host cell through the interaction with host IGF1R. This interaction activates PRKCZ/PKCzeta that recruits host NCL/nucleolin to the apical cell surface where it can bind fusion glycoprotein F1. Later in infection, F protein expressed at the plasma membrane of infected cells can mediate fusion with adjacent cells to form syncytia, a cytopathic effect that could lead to tissue necrosis. F protein may trigger p53-dependent apoptosis. Functionally, major determinant of the species specificity of RSV infection. The trimer of F1-F2 (F protein) also facilitates the attachment to host cell by binding to host heparan sulfate. F protein is involved in the entry into the host cell through the interaction with host IGF1R. This interaction activates PRKCZ/PKCzeta that recruits host NCL/nucleolin to the apical cell surface where it can bind fusion glycoprotein F1. Later in infection, F protein expressed at the plasma membrane of infected cells can mediate fusion with adjacent cells to form syncytia, a cytopathic effect that could lead to tissue necrosis. F protein seems to trigger p53-dependent apoptosis. This is Fusion glycoprotein F0 (F) from Human respiratory syncytial virus A (strain A2).